Consider the following 369-residue polypeptide: Anhydro-N-acetylmuramic acid kinase (369 aa).

12–19 provides a ligand contact to ATP; sequence GTSMDGVD.

This sequence belongs to the anhydro-N-acetylmuramic acid kinase family.

The enzyme catalyses 1,6-anhydro-N-acetyl-beta-muramate + ATP + H2O = N-acetyl-D-muramate 6-phosphate + ADP + H(+). It participates in amino-sugar metabolism; 1,6-anhydro-N-acetylmuramate degradation. Its pathway is cell wall biogenesis; peptidoglycan recycling. Catalyzes the specific phosphorylation of 1,6-anhydro-N-acetylmuramic acid (anhMurNAc) with the simultaneous cleavage of the 1,6-anhydro ring, generating MurNAc-6-P. Is required for the utilization of anhMurNAc either imported from the medium or derived from its own cell wall murein, and thus plays a role in cell wall recycling. In Shewanella sp. (strain ANA-3), this protein is Anhydro-N-acetylmuramic acid kinase.